A 92-amino-acid polypeptide reads, in one-letter code: Small ribosomal subunit protein uS19 (92 aa).

Protein S19 forms a complex with S13 that binds strongly to the 16S ribosomal RNA. The polypeptide is Small ribosomal subunit protein uS19 (Rhodopseudomonas palustris (strain ATCC BAA-98 / CGA009)).